The chain runs to 751 residues: Photosystem I P700 chlorophyll a apoprotein A1 (751 aa).

8 consecutive transmembrane segments (helical) span residues 71 to 94 (VFSAHFGQLAIIFTWLSGMYFHGA), 157 to 180 (LYCTAIGALIFAALMLFAGWFHYH), 196 to 220 (LNHHLAGLLGLGSLSWAGHQIHVSL), 292 to 310 (TAHHHLAIAVLFLIAGHMY), 347 to 370 (WHAQLALNLAMLGSLTIIVAHHMY), 386 to 412 (LSLFTHHMWIGGFIIVGAAAHAAIFLV), 434 to 456 (AIISHLNWVCIFLGFHSFGLYIH), and 532 to 550 (FLVHHIHAFTIHVTVLILL). [4Fe-4S] cluster-binding residues include Cys574 and Cys583. A run of 2 helical transmembrane segments spans residues 590-611 (HVFLGLFWMYNAISVVIFHFSW) and 665-687 (LSAYGLFFLGAHFVWAFSLMFLF). A chlorophyll a'-binding site is contributed by His676. Residues Met684 and Tyr692 each coordinate chlorophyll a. Trp693 serves as a coordination point for phylloquinone. Residues 725–745 (AVGVAHYLLGGIVTTWAFFLA) traverse the membrane as a helical segment.

The protein belongs to the PsaA/PsaB family. As to quaternary structure, the PsaA/B heterodimer binds the P700 chlorophyll special pair and subsequent electron acceptors. PSI consists of a core antenna complex that captures photons, and an electron transfer chain that converts photonic excitation into a charge separation. The eukaryotic PSI reaction center is composed of at least 11 subunits. It depends on P700 is a chlorophyll a/chlorophyll a' dimer, A0 is one or more chlorophyll a, A1 is one or both phylloquinones and FX is a shared 4Fe-4S iron-sulfur center. as a cofactor.

It localises to the plastid. The protein resides in the chloroplast thylakoid membrane. It carries out the reaction reduced [plastocyanin] + hnu + oxidized [2Fe-2S]-[ferredoxin] = oxidized [plastocyanin] + reduced [2Fe-2S]-[ferredoxin]. In terms of biological role, psaA and PsaB bind P700, the primary electron donor of photosystem I (PSI), as well as the electron acceptors A0, A1 and FX. PSI is a plastocyanin-ferredoxin oxidoreductase, converting photonic excitation into a charge separation, which transfers an electron from the donor P700 chlorophyll pair to the spectroscopically characterized acceptors A0, A1, FX, FA and FB in turn. Oxidized P700 is reduced on the lumenal side of the thylakoid membrane by plastocyanin. This chain is Photosystem I P700 chlorophyll a apoprotein A1, found in Welwitschia mirabilis (Tree tumbo).